Reading from the N-terminus, the 95-residue chain is Large ribosomal subunit protein bL25 (95 aa).

It belongs to the bacterial ribosomal protein bL25 family. In terms of assembly, part of the 50S ribosomal subunit; part of the 5S rRNA/L5/L18/L25 subcomplex. Contacts the 5S rRNA. Binds to the 5S rRNA independently of L5 and L18.

This is one of the proteins that binds to the 5S RNA in the ribosome where it forms part of the central protuberance. The chain is Large ribosomal subunit protein bL25 from Shewanella putrefaciens (strain CN-32 / ATCC BAA-453).